A 121-amino-acid chain; its full sequence is Large ribosomal subunit protein bL12 (121 aa).

The protein belongs to the bacterial ribosomal protein bL12 family. In terms of assembly, homodimer. Part of the ribosomal stalk of the 50S ribosomal subunit. Forms a multimeric L10(L12)X complex, where L10 forms an elongated spine to which 2 to 4 L12 dimers bind in a sequential fashion. Binds GTP-bound translation factors.

In terms of biological role, forms part of the ribosomal stalk which helps the ribosome interact with GTP-bound translation factors. Is thus essential for accurate translation. This chain is Large ribosomal subunit protein bL12, found in Clostridium novyi (strain NT).